The chain runs to 470 residues: Argininosuccinate lyase (470 aa).

The protein belongs to the lyase 1 family. Argininosuccinate lyase subfamily.

The protein localises to the cytoplasm. It carries out the reaction 2-(N(omega)-L-arginino)succinate = fumarate + L-arginine. It functions in the pathway amino-acid biosynthesis; L-arginine biosynthesis; L-arginine from L-ornithine and carbamoyl phosphate: step 3/3. In Mycobacterium tuberculosis (strain CDC 1551 / Oshkosh), this protein is Argininosuccinate lyase.